Consider the following 890-residue polypeptide: V-type proton ATPase subunit a, Golgi isoform (890 aa).

At Met1 the chain carries N-acetylmethionine. Residues 1-450 (MNQEEAIFRS…DAYGIATYKE (450 aa)) lie on the Cytoplasmic side of the membrane. The stretch at 113–154 (LENVNDMVKEITDCESRARQLDESLDSLRSKLNDLLEQRQVI) forms a coiled coil. A phosphoserine mark is found at Ser223 and Ser228. Positions 297 to 347 (LKKVKRVIDSLNGKIVSLNTRSSELVDTLNRQIDDLQRILDTTEQTLHTEL) form a coiled coil. Residues 451-469 (INAGLATVVTFPFMFAIMF) traverse the membrane as a helical segment. The Vacuolar portion of the chain corresponds to 470–471 (GD). The chain crosses the membrane as a helical span at residues 472–488 (MGHGFILFLMALFLVLN). Over 489-502 (ERKFGAMHRDEIFD) the chain is Cytoplasmic. Residues 503 to 532 (MAFTGRYVLLLMGAFSVYTGLLYNDIFSKS) traverse the membrane as a helical segment. Topologically, residues 533–580 (MTIFKSGWQWPSTFRKGESIEAKKTGVYPFGLDFAWHGTDNGLLFSNS) are vacuolar. Residues 581–600 (YKMKLSILMGYAHMTYSFMF) traverse the membrane as a helical segment. Residues 601–618 (SYINYRAKNSKVDIIGNF) lie on the Cytoplasmic side of the membrane. Residues 619–639 (IPGLVFMQSIFGYLSWAIVYK) traverse the membrane as a helical segment. At 640–682 (WSKDWIKDDKPAPGLLNMLINMFLAPGTIDDQLYSGQAKLQVV) the chain is on the vacuolar side. The helical transmembrane segment at 683 to 702 (LLLAALVCVPWLLLYKPLTL) threads the bilayer. Topologically, residues 703–779 (RRLNKNGGGG…DVMIHQVIHT (77 aa)) are cytoplasmic. Residues 780-804 (IEFCLNCISHTASYLRLWALSLAHA) traverse the membrane as a helical segment. The Vacuolar portion of the chain corresponds to 805-828 (QLSSVLWDMTISNAFSSKNSGSPL). Residues 829 to 867 (AVMKVVFLFAMWFVLTVCILVFMEGTSAMLHALRLHWVE) traverse the membrane as a helical segment. Residues 868–890 (AMSKFFEGEGYAYEPFSFRAIIE) are Cytoplasmic-facing.

The protein belongs to the V-ATPase 116 kDa subunit family. In terms of assembly, V-ATPase is a heteromultimeric enzyme composed of a peripheral catalytic V1 complex (components A to H) attached to an integral membrane V0 proton pore complex (components: a, c, c', c'', d, e, f and VOA1). In terms of processing, glycosylated.

The protein resides in the endosome membrane. It is found in the golgi apparatus membrane. Subunit of the V0 complex of vacuolar(H+)-ATPase (V-ATPase), a multisubunit enzyme composed of a peripheral complex (V1) that hydrolyzes ATP and a membrane integral complex (V0) that translocates protons. V-ATPase is responsible for acidifying and maintaining the pH of intracellular compartments. Is present only in Golgi- and endosome-residing V-ATPase complexes; enzymes containing this subunit have a 4-fold lower ratio of proton transport to ATP hydrolysis than complexes containing the vacuolar isoform and do not dissociate V1 and V0 in response to glucose depletion. The polypeptide is V-type proton ATPase subunit a, Golgi isoform (STV1) (Saccharomyces cerevisiae (strain ATCC 204508 / S288c) (Baker's yeast)).